The chain runs to 157 residues: Transcription antitermination protein NusB (157 aa).

Belongs to the NusB family.

Functionally, involved in transcription antitermination. Required for transcription of ribosomal RNA (rRNA) genes. Binds specifically to the boxA antiterminator sequence of the ribosomal RNA (rrn) operons. The sequence is that of Transcription antitermination protein NusB from Xylella fastidiosa (strain M12).